The primary structure comprises 364 residues: Transcription elongation factor, mitochondrial (364 aa).

A mitochondrion-targeting transit peptide spans methionine 1–lysine 39.

The protein belongs to the TEFM family. In terms of assembly, interacts with POLRMT.

Its subcellular location is the mitochondrion matrix. It is found in the mitochondrion nucleoid. Functionally, transcription elongation factor which increases mitochondrial RNA polymerase processivity. Regulates transcription of the mitochondrial genome, including genes important for the oxidative phosphorylation machinery. The chain is Transcription elongation factor, mitochondrial (Tefm) from Mus musculus (Mouse).